A 194-amino-acid polypeptide reads, in one-letter code: uncharacterized protein (194 aa).

Residues 25-156 form a disordered region; sequence PSWACRRGGP…ESPLGTLPCS (132 aa). Polar residues predominate over residues 43 to 57; sequence GPSTVPVTPTAGSCQ. Residues 104 to 113 are compositionally biased toward low complexity; sequence SSSPGPSFHL.

This is an uncharacterized protein from Homo sapiens (Human).